We begin with the raw amino-acid sequence, 109 residues long: uncharacterized protein (109 aa).

This is an uncharacterized protein from Mycobacterium tuberculosis (strain CDC 1551 / Oshkosh).